The primary structure comprises 161 residues: 6,7-dimethyl-8-ribityllumazine synthase (161 aa).

5-amino-6-(D-ribitylamino)uracil-binding positions include W31, 65–67 (TFE), and 89–91 (CVV). A (2S)-2-hydroxy-3-oxobutyl phosphate-binding site is contributed by 94–95 (DT). Residue H97 is the Proton donor of the active site. 5-amino-6-(D-ribitylamino)uracil is bound at residue F122. Residue R136 coordinates (2S)-2-hydroxy-3-oxobutyl phosphate.

It belongs to the DMRL synthase family.

It carries out the reaction (2S)-2-hydroxy-3-oxobutyl phosphate + 5-amino-6-(D-ribitylamino)uracil = 6,7-dimethyl-8-(1-D-ribityl)lumazine + phosphate + 2 H2O + H(+). It participates in cofactor biosynthesis; riboflavin biosynthesis; riboflavin from 2-hydroxy-3-oxobutyl phosphate and 5-amino-6-(D-ribitylamino)uracil: step 1/2. Catalyzes the formation of 6,7-dimethyl-8-ribityllumazine by condensation of 5-amino-6-(D-ribitylamino)uracil with 3,4-dihydroxy-2-butanone 4-phosphate. This is the penultimate step in the biosynthesis of riboflavin. This chain is 6,7-dimethyl-8-ribityllumazine synthase, found in Porphyromonas gingivalis (strain ATCC 33277 / DSM 20709 / CIP 103683 / JCM 12257 / NCTC 11834 / 2561).